The sequence spans 314 residues: Homoserine O-acetyltransferase (314 aa).

Catalysis depends on Cys-142, which acts as the Acyl-thioester intermediate. Residues Lys-163 and Ser-192 each coordinate substrate. His-235 serves as the catalytic Proton acceptor. The active site involves Glu-237. Residue Arg-249 coordinates substrate.

This sequence belongs to the MetA family.

The protein localises to the cytoplasm. The enzyme catalyses L-homoserine + acetyl-CoA = O-acetyl-L-homoserine + CoA. It functions in the pathway amino-acid biosynthesis; L-methionine biosynthesis via de novo pathway; O-acetyl-L-homoserine from L-homoserine: step 1/1. Its function is as follows. Transfers an acetyl group from acetyl-CoA to L-homoserine, forming acetyl-L-homoserine. The polypeptide is Homoserine O-acetyltransferase (Streptococcus pneumoniae (strain Taiwan19F-14)).